A 394-amino-acid chain; its full sequence is Phosphopentomutase (394 aa).

Residues D13, D286, H291, D327, H328, and H339 each contribute to the Mn(2+) site.

Belongs to the phosphopentomutase family. Mn(2+) serves as cofactor.

Its subcellular location is the cytoplasm. It carries out the reaction 2-deoxy-alpha-D-ribose 1-phosphate = 2-deoxy-D-ribose 5-phosphate. The enzyme catalyses alpha-D-ribose 1-phosphate = D-ribose 5-phosphate. The protein operates within carbohydrate degradation; 2-deoxy-D-ribose 1-phosphate degradation; D-glyceraldehyde 3-phosphate and acetaldehyde from 2-deoxy-alpha-D-ribose 1-phosphate: step 1/2. In terms of biological role, isomerase that catalyzes the conversion of deoxy-ribose 1-phosphate (dRib-1-P) and ribose 1-phosphate (Rib-1-P) to deoxy-ribose 5-phosphate (dRib-5-P) and ribose 5-phosphate (Rib-5-P), respectively. This Bacillus cereus (strain AH187) protein is Phosphopentomutase.